The chain runs to 218 residues: Large ribosomal subunit protein uL3 (218 aa).

It belongs to the universal ribosomal protein uL3 family. In terms of assembly, part of the 50S ribosomal subunit. Forms a cluster with proteins L14 and L19.

Its function is as follows. One of the primary rRNA binding proteins, it binds directly near the 3'-end of the 23S rRNA, where it nucleates assembly of the 50S subunit. In Corynebacterium jeikeium (strain K411), this protein is Large ribosomal subunit protein uL3.